We begin with the raw amino-acid sequence, 757 residues long: Cap-specific mRNA (nucleoside-2'-O-)-methyltransferase 1 (757 aa).

Residues 1–61 (MFQSNQYDEY…EDDEEEEDTP (61 aa)) form a disordered region. Composition is skewed to acidic residues over residues 18–32 (EENE…NENE) and 40–59 (GDQD…EEED). Residues 62 to 108 (KLSFGAKFLAKHGHIEGQGLGKEKDGRIDLIEVDRFQSTKGLGFAEN) form the G-patch domain. The RrmJ-type SAM-dependent 2'-O-MTase domain maps to 214 to 438 (IFINRAAVKM…ERYIICKNFL (225 aa)). S-adenosyl-L-methionine-binding residues include Gly-257, Glu-301, and Asp-352. Lys-392 serves as the catalytic Proton acceptor. Positions 538–548 (HKNRQKHHHNN) are enriched in basic residues. A disordered region spans residues 538 to 670 (HKNRQKHHHN…NNNNNNNNKN (133 aa)). Over residues 549-569 (HSNNNNNNNNSNNNNNNNNQH) the composition is skewed to low complexity. Residues 570 to 581 (QHQHHQHQHHQN) are compositionally biased toward basic residues. Low complexity predominate over residues 597-668 (NNNINNNSNN…NNNNNNNNNN (72 aa)).

The catalysed reaction is a 5'-end (N(7)-methyl 5'-triphosphoguanosine)-ribonucleoside in mRNA + S-adenosyl-L-methionine = a 5'-end (N(7)-methyl 5'-triphosphoguanosine)-(2'-O-methyl-ribonucleoside) in mRNA + S-adenosyl-L-homocysteine + H(+). Functionally, S-adenosyl-L-methionine-dependent methyltransferase that mediates mRNA cap1 2'-O-ribose methylation to the 5'-cap structure of mRNAs. Methylates the ribose of the first nucleotide of a m(7)GpppG-capped mRNA to produce m(7)GpppNmp (cap1). Cap1 modification is linked to higher levels of translation. The chain is Cap-specific mRNA (nucleoside-2'-O-)-methyltransferase 1 from Dictyostelium discoideum (Social amoeba).